A 150-amino-acid chain; its full sequence is 3-hydroxyacyl-[acyl-carrier-protein] dehydratase FabZ (150 aa).

The active site involves His51.

This sequence belongs to the thioester dehydratase family. FabZ subfamily.

The protein resides in the cytoplasm. It catalyses the reaction a (3R)-hydroxyacyl-[ACP] = a (2E)-enoyl-[ACP] + H2O. Functionally, involved in unsaturated fatty acids biosynthesis. Catalyzes the dehydration of short chain beta-hydroxyacyl-ACPs and long chain saturated and unsaturated beta-hydroxyacyl-ACPs. This Geobacter sulfurreducens (strain ATCC 51573 / DSM 12127 / PCA) protein is 3-hydroxyacyl-[acyl-carrier-protein] dehydratase FabZ.